A 263-amino-acid chain; its full sequence is Protein maestro (263 aa).

Residues 1 to 21 (MDQTPRRMLGQPLSSPATQPK) are disordered. The HEAT repeat unit spans residues 128-163 (SFFIDITLQTRTLLDDENDSLRYSAFVLFGQLADLA).

It localises to the nucleus. The protein resides in the nucleolus. The protein is Protein maestro (MRO) of Bos taurus (Bovine).